Here is a 347-residue protein sequence, read N- to C-terminus: Tetraacyldisaccharide 4'-kinase (347 aa).

65–72 (FVGGTGKT) is a binding site for ATP.

This sequence belongs to the LpxK family.

It catalyses the reaction a lipid A disaccharide + ATP = a lipid IVA + ADP + H(+). It functions in the pathway glycolipid biosynthesis; lipid IV(A) biosynthesis; lipid IV(A) from (3R)-3-hydroxytetradecanoyl-[acyl-carrier-protein] and UDP-N-acetyl-alpha-D-glucosamine: step 6/6. Transfers the gamma-phosphate of ATP to the 4'-position of a tetraacyldisaccharide 1-phosphate intermediate (termed DS-1-P) to form tetraacyldisaccharide 1,4'-bis-phosphate (lipid IVA). The protein is Tetraacyldisaccharide 4'-kinase of Janthinobacterium sp. (strain Marseille) (Minibacterium massiliensis).